Consider the following 723-residue polypeptide: Solute carrier organic anion transporter family member 4A1 (723 aa).

Residues Met-1–Lys-102 lie on the Cytoplasmic side of the membrane. The disordered stretch occupies residues Ser-23 to Lys-64. A compositionally biased stretch (low complexity) spans Pro-33 to Ala-46. 3 positions are modified to phosphoserine: Ser-39, Ser-42, and Ser-45. Residues Gly-103–Ile-123 traverse the membrane as a helical segment. The Extracellular portion of the chain corresponds to Asn-124 to Gly-142. The helical transmembrane segment at Leu-143–Gly-163 threads the bilayer. Residues Gly-164–Pro-169 are Cytoplasmic-facing. The helical transmembrane segment at Arg-170 to Gly-194 threads the bilayer. Topologically, residues Arg-195–Gly-224 are extracellular. Asn-212 carries an N-linked (GlcNAc...) asparagine glycan. The chain crosses the membrane as a helical span at residues Leu-225 to Asp-255. The Cytoplasmic portion of the chain corresponds to Glu-256–Ala-274. Residues Ile-275–Val-295 traverse the membrane as a helical segment. At Gly-296 to Val-309 the chain is on the extracellular side. The helical transmembrane segment at Gly-310–Pro-334 threads the bilayer. Topologically, residues Arg-335 to Leu-380 are cytoplasmic. Residues Leu-381 to Ala-402 traverse the membrane as a helical segment. Residues Gly-403–Glu-422 are Extracellular-facing. Residues Ala-423–Val-446 traverse the membrane as a helical segment. The Cytoplasmic segment spans residues Asn-447–Lys-450. A helical transmembrane segment spans residues Leu-451–Val-473. Residues Phe-474–Leu-582 are Extracellular-facing. Positions Leu-500–Leu-557 constitute a Kazal-like domain. 2 disulfide bridges follow: Cys-506/Cys-536 and Cys-521/Cys-555. A glycan (N-linked (GlcNAc...) asparagine) is linked at Asn-566. A helical membrane pass occupies residues Leu-583–Leu-605. At Arg-606–Ser-614 the chain is on the cytoplasmic side. A helical membrane pass occupies residues Phe-615–Ile-640. The Extracellular portion of the chain corresponds to Asp-641–Gly-673. A helical membrane pass occupies residues Leu-674–Tyr-691. Residues Lys-692–Val-723 are Cytoplasmic-facing. The segment at Gly-700–Val-723 is disordered. The span at Leu-701–Val-723 shows a compositional bias: low complexity.

This sequence belongs to the organo anion transporter (TC 2.A.60) family.

Its subcellular location is the cell membrane. It catalyses the reaction 3,3',5-triiodo-L-thyronine(out) + L-glutamate(in) = 3,3',5-triiodo-L-thyronine(in) + L-glutamate(out). It carries out the reaction L-thyroxine(out) + L-glutamate(in) = L-thyroxine(in) + L-glutamate(out). The catalysed reaction is estrone 3-sulfate(out) + L-glutamate(in) = estrone 3-sulfate(in) + L-glutamate(out). The enzyme catalyses taurocholate(out) + L-glutamate(in) = taurocholate(in) + L-glutamate(out). It catalyses the reaction 3,3',5-triiodo-L-thyronine(out) = 3,3',5-triiodo-L-thyronine(in). It carries out the reaction L-thyroxine(out) = L-thyroxine(in). The catalysed reaction is 3,3',5'-triiodo-L-thyronine(out) = 3,3',5'-triiodo-L-thyronine(in). The enzyme catalyses estrone 3-sulfate(out) = estrone 3-sulfate(in). It catalyses the reaction 17beta-estradiol 17-O-(beta-D-glucuronate)(out) = 17beta-estradiol 17-O-(beta-D-glucuronate)(in). It carries out the reaction taurocholate(out) = taurocholate(in). The catalysed reaction is prostaglandin E2(out) = prostaglandin E2(in). Functionally, organic anion antiporter with apparent broad substrate specificity. Recognizes various substrates including thyroid hormones 3,3',5-triiodo-L-thyronine (T3), L-thyroxine (T4) and 3,3',5'-triiodo-L-thyronine (rT3), conjugated steroids such as estrone 3-sulfate and estradiol 17-beta glucuronide, bile acids such as taurocholate and prostanoids such as prostaglandin E2, likely operating in a tissue-specific manner. May be involved in uptake of metabolites from the circulation into organs such as kidney, liver or placenta. Possibly drives the selective transport of thyroid hormones and estrogens coupled to an outward glutamate gradient across the microvillous membrane of the placenta. The transport mechanism, its electrogenicity and potential tissue-specific counterions remain to be elucidated. The chain is Solute carrier organic anion transporter family member 4A1 (Slco4a1) from Mus musculus (Mouse).